A 989-amino-acid chain; its full sequence is SWI/SNF-related matrix-associated actin-dependent regulator of chromatin subfamily A containing DEAD/H box 1 homolog (989 aa).

The tract at residues 1 to 288 (MSTTSDFQTG…RRAKRGETKN (288 aa)) is disordered. Acidic residues predominate over residues 72–105 (DDDDEDYVDETMPSEDEEDFDNNEEDEDDDDYEE). The segment covering 109-120 (RKRKAPSKKKLV) has biased composition (basic residues). The span at 124 to 140 (ENYRREDSETPEPEMKR) shows a compositional bias: basic and acidic residues. Acidic residues predominate over residues 187 to 200 (DDESEDDFINDEEI). Composition is skewed to basic and acidic residues over residues 201-221 (SEKG…GKDS) and 241-250 (AQKEQKKKAE). Residues 251 to 276 (SDEDWEEDEDDMNADGDETPSDDSDI) are compositionally biased toward acidic residues. The segment covering 277 to 288 (EERRAKRGETKN) has biased composition (basic and acidic residues). One can recognise a Helicase ATP-binding domain in the interval 406 to 574 (IMMYNKDLNA…ISLMYFVLSK (169 aa)). 419–426 (DEMGLGKT) contacts ATP. The short motif at 525 to 528 (DEGH) is the DEGH box element. The Helicase C-terminal domain maps to 757-912 (QLDVMLPEIQ…GVKGQLDEDA (156 aa)). The disordered stretch occupies residues 941–989 (RYDDVEDDSGDSKNGIDAEEAAKKEDEAVKEPVEKEQQKEEESQPSTSA). Positions 950 to 982 (GDSKNGIDAEEAAKKEDEAVKEPVEKEQQKEEE) are enriched in basic and acidic residues.

This sequence belongs to the SNF2/RAD54 helicase family.

The protein resides in the nucleus. Its subcellular location is the chromosome. It carries out the reaction ATP + H2O = ADP + phosphate + H(+). In terms of biological role, DNA helicase that possesses intrinsic ATP-dependent nucleosome-remodeling activity and is both required for DNA repair and heterochromatin organization. Promotes DNA end resection of double-strand breaks (DSBs) following DNA damage: probably acts by weakening histone DNA interactions in nucleosomes flanking DSBs. In Caenorhabditis elegans, this protein is SWI/SNF-related matrix-associated actin-dependent regulator of chromatin subfamily A containing DEAD/H box 1 homolog.